The primary structure comprises 161 residues: MSQLTHINAAGEAHMVDVSGKAETVREARAEAFVEMRPETLSMIVSGSHHKGDVFATARIAGIQAAKRTWELIPLCHPLLLSKVEVQLFADEARSRVRIESLCRLTGKTGVEMEALTAASVAALTIYDMCKAVQKDMVIGPVRLLAKSGGKSGDFQVDAHD.

Substrate-binding positions include 75-77 and 113-114; these read LCH and ME. Residue Asp128 is part of the active site.

It belongs to the MoaC family. In terms of assembly, homohexamer; trimer of dimers.

It carries out the reaction (8S)-3',8-cyclo-7,8-dihydroguanosine 5'-triphosphate = cyclic pyranopterin phosphate + diphosphate. The protein operates within cofactor biosynthesis; molybdopterin biosynthesis. In terms of biological role, catalyzes the conversion of (8S)-3',8-cyclo-7,8-dihydroguanosine 5'-triphosphate to cyclic pyranopterin monophosphate (cPMP). This Cronobacter sakazakii (strain ATCC BAA-894) (Enterobacter sakazakii) protein is Cyclic pyranopterin monophosphate synthase.